We begin with the raw amino-acid sequence, 184 residues long: Large ribosomal subunit protein uL5c (184 aa).

The protein belongs to the universal ribosomal protein uL5 family. Part of the 50S ribosomal subunit; contacts the 5S rRNA.

It is found in the plastid. Its subcellular location is the chloroplast. Functionally, binds 5S rRNA, forms part of the central protuberance of the 50S subunit. The polypeptide is Large ribosomal subunit protein uL5c (rpl5) (Ostreococcus tauri).